The sequence spans 262 residues: Linker for activation of T-cells family member 1 (262 aa).

Topologically, residues 1 to 4 are extracellular; the sequence is MEEA. The chain crosses the membrane as a helical; Signal-anchor for type III membrane protein span at residues 5–27; sequence ILVPCVLGLLLLPILAMLMALCV. 2 S-palmitoyl cysteine lipidation sites follow: Cys26 and Cys29. Topologically, residues 28-262 are cytoplasmic; sequence HCHRLPGSYD…PDYENLQELN (235 aa). At Thr39 the chain carries Phosphothreonine. 7 positions are modified to phosphoserine: Ser40, Ser41, Ser43, Ser84, Ser101, Ser106, and Ser109. The tract at residues 69 to 115 is disordered; sequence SYPPLSQPDLLPIPRSPQPLGGSHRTPSSRRDSDGANSVASYENEGA. Phosphotyrosine is present on residues Tyr110, Tyr156, Tyr161, Tyr200, and Tyr220. Positions 161–164 are interaction with PLCG1; that stretch reads YLVV. Interaction with GRB2, GRAP2 and PIK3R1 regions lie at residues 200–203 and 220–223; these read YVNV. Positions 206–262 are disordered; that stretch reads SGESAEASLDGSREYVNVSQELHPGAAKTEPAALSSQEAEEVEEEGAPDYENLQELN. Ser224, Ser240, and Ser241 each carry phosphoserine. Residues 243–253 show a composition bias toward acidic residues; sequence EAEEVEEEGAP. Residue Tyr255 is modified to Phosphotyrosine.

In terms of assembly, when phosphorylated, interacts directly with the PIK3R1 subunit of phosphoinositide 3-kinase and the SH2 domains of GRB2, GRAP, GRAP2, PLCG1 and PLCG2. Interacts indirectly with CBL, SOS, VAV, and LCP2. Interacts with SHB, SKAP2 and CLNK. Interacts with FCGR1A. Interacts with GRB2, PLCG1 and THEMIS upon TCR activation in thymocytes. Interacts with THEMIS2. (Microbial infection) Interacts with herpes virus 1/HHV-1 protein US3; this interaction prevents the interaction between LAT and TRAF6. Phosphorylated on tyrosines by ZAP70 upon TCR activation, or by SYK upon other immunoreceptor activation; which leads to the recruitment of multiple signaling molecules. Is one of the most prominently tyrosine-phosphorylated proteins detected following TCR engagement. May be dephosphorylated by PTPRJ. Phosphorylated by ITK leading to the recruitment of VAV1 to LAT-containing complexes. Post-translationally, palmitoylation of Cys-26 and Cys-29 is required for raft targeting and efficient phosphorylation. In terms of processing, 'Lys-63'-linked ubiquitinated by TRAF6. In terms of tissue distribution, expressed in thymus, T-cells, NK cells, mast cells and, at lower levels, in spleen. Present in T-cells but not B-cells (at protein level).

The protein resides in the cell membrane. Functionally, required for TCR (T-cell antigen receptor)- and pre-TCR-mediated signaling, both in mature T-cells and during their development. Involved in FCGR3 (low affinity immunoglobulin gamma Fc region receptor III)-mediated signaling in natural killer cells and FCER1 (high affinity immunoglobulin epsilon receptor)-mediated signaling in mast cells. Couples activation of these receptors and their associated kinases with distal intracellular events such as mobilization of intracellular calcium stores, PKC activation, MAPK activation or cytoskeletal reorganization through the recruitment of PLCG1, GRB2, GRAP2, and other signaling molecules. The polypeptide is Linker for activation of T-cells family member 1 (LAT) (Homo sapiens (Human)).